The primary structure comprises 99 residues: Large ribosomal subunit protein eL30 (99 aa).

It belongs to the eukaryotic ribosomal protein eL30 family.

This chain is Large ribosomal subunit protein eL30 (rpl30e), found in Pyrococcus horikoshii (strain ATCC 700860 / DSM 12428 / JCM 9974 / NBRC 100139 / OT-3).